The following is a 234-amino-acid chain: Cell fusion protein dni1 (234 aa).

Positions 1–32 (MLFLHSVVQGTGTLCTLAAWILLALVMTGCQS) are cleaved as a signal peptide. Over 33 to 96 (STTSKFQLFS…RSKFLINEVH (64 aa)) the chain is Extracellular. Residues 97–117 (PWMIVFSFCVCGVSFLMGVVS) form a helical membrane-spanning segment. Residues 118–132 (SLPLIGRLEFLRNIR) lie on the Cytoplasmic side of the membrane. Residues 133–153 (ISLSFFSFFSILVTALFAHVA) traverse the membrane as a helical segment. Over 154–178 (VSSFVMAVGNGTQNRVTASLGKKAM) the chain is Extracellular. A helical membrane pass occupies residues 179-199 (IFLWCSMGLVTLTGITDSIIL). Residues 200–234 (LVTSRTKKIRKTILEKSKVLTPSSSFSSKSSTTKY) lie on the Cytoplasmic side of the membrane.

It belongs to the SUR7 family.

The protein localises to the cell membrane. The protein resides in the cell tip. Functionally, cell membrane protein which plays a relevant role in coordinating membrane organization and cell wall remodeling during mating. The polypeptide is Cell fusion protein dni1 (dni1) (Schizosaccharomyces pombe (strain 972 / ATCC 24843) (Fission yeast)).